A 171-amino-acid polypeptide reads, in one-letter code: Sec-independent protein translocase protein TatB (171 aa).

A helical membrane pass occupies residues 1-21; sequence MFDIGFSELLLVFIIGLVVLG. The tract at residues 89–171 is disordered; the sequence is AESMKRSYVA…APSPSSSDKP (83 aa). The segment covering 100-123 has biased composition (basic and acidic residues); that stretch reads DPEKASDEAHTIHNPVVKDNETAH. The span at 130 to 139 shows a compositional bias: polar residues; the sequence is AAQTQASSPE.

It belongs to the TatB family. In terms of assembly, the Tat system comprises two distinct complexes: a TatABC complex, containing multiple copies of TatA, TatB and TatC subunits, and a separate TatA complex, containing only TatA subunits. Substrates initially bind to the TatABC complex, which probably triggers association of the separate TatA complex to form the active translocon.

The protein localises to the cell inner membrane. Its function is as follows. Part of the twin-arginine translocation (Tat) system that transports large folded proteins containing a characteristic twin-arginine motif in their signal peptide across membranes. Together with TatC, TatB is part of a receptor directly interacting with Tat signal peptides. TatB may form an oligomeric binding site that transiently accommodates folded Tat precursor proteins before their translocation. In Escherichia coli O1:K1 / APEC, this protein is Sec-independent protein translocase protein TatB.